The primary structure comprises 168 residues: Endoribonuclease YbeY (168 aa).

Zn(2+) is bound by residues His-128, His-132, and His-138.

The protein belongs to the endoribonuclease YbeY family. Requires Zn(2+) as cofactor.

Its subcellular location is the cytoplasm. Its function is as follows. Single strand-specific metallo-endoribonuclease involved in late-stage 70S ribosome quality control and in maturation of the 3' terminus of the 16S rRNA. The protein is Endoribonuclease YbeY of Sphingopyxis alaskensis (strain DSM 13593 / LMG 18877 / RB2256) (Sphingomonas alaskensis).